A 383-amino-acid chain; its full sequence is Arginine biosynthesis bifunctional protein ArgJ (383 aa).

Residues Thr146, Lys168, Thr179, Glu259, Asn378, and Ser383 each coordinate substrate. Residue Thr179 is the Nucleophile of the active site.

It belongs to the ArgJ family. Heterotetramer of two alpha and two beta chains.

Its subcellular location is the cytoplasm. The enzyme catalyses N(2)-acetyl-L-ornithine + L-glutamate = N-acetyl-L-glutamate + L-ornithine. It carries out the reaction L-glutamate + acetyl-CoA = N-acetyl-L-glutamate + CoA + H(+). Its pathway is amino-acid biosynthesis; L-arginine biosynthesis; L-ornithine and N-acetyl-L-glutamate from L-glutamate and N(2)-acetyl-L-ornithine (cyclic): step 1/1. It participates in amino-acid biosynthesis; L-arginine biosynthesis; N(2)-acetyl-L-ornithine from L-glutamate: step 1/4. Catalyzes two activities which are involved in the cyclic version of arginine biosynthesis: the synthesis of N-acetylglutamate from glutamate and acetyl-CoA as the acetyl donor, and of ornithine by transacetylation between N(2)-acetylornithine and glutamate. This is Arginine biosynthesis bifunctional protein ArgJ from Streptomyces avermitilis (strain ATCC 31267 / DSM 46492 / JCM 5070 / NBRC 14893 / NCIMB 12804 / NRRL 8165 / MA-4680).